Reading from the N-terminus, the 484-residue chain is Glycogen synthase (484 aa).

Lys18 lines the ADP-alpha-D-glucose pocket.

This sequence belongs to the glycosyltransferase 1 family. Bacterial/plant glycogen synthase subfamily.

The catalysed reaction is [(1-&gt;4)-alpha-D-glucosyl](n) + ADP-alpha-D-glucose = [(1-&gt;4)-alpha-D-glucosyl](n+1) + ADP + H(+). Its pathway is glycan biosynthesis; glycogen biosynthesis. Synthesizes alpha-1,4-glucan chains using ADP-glucose. This is Glycogen synthase from Vibrio cholerae serotype O1 (strain ATCC 39541 / Classical Ogawa 395 / O395).